We begin with the raw amino-acid sequence, 492 residues long: N-succinylglutamate 5-semialdehyde dehydrogenase (492 aa).

220-225 (GSASTG) is a binding site for NAD(+). Active-site residues include E243 and C277.

Belongs to the aldehyde dehydrogenase family. AstD subfamily.

The enzyme catalyses N-succinyl-L-glutamate 5-semialdehyde + NAD(+) + H2O = N-succinyl-L-glutamate + NADH + 2 H(+). It participates in amino-acid degradation; L-arginine degradation via AST pathway; L-glutamate and succinate from L-arginine: step 4/5. Catalyzes the NAD-dependent reduction of succinylglutamate semialdehyde into succinylglutamate. This Salmonella paratyphi C (strain RKS4594) protein is N-succinylglutamate 5-semialdehyde dehydrogenase.